The following is a 230-amino-acid chain: Large ribosomal subunit protein uL1 (230 aa).

It belongs to the universal ribosomal protein uL1 family. As to quaternary structure, part of the 50S ribosomal subunit.

In terms of biological role, binds directly to 23S rRNA. The L1 stalk is quite mobile in the ribosome, and is involved in E site tRNA release. Protein L1 is also a translational repressor protein, it controls the translation of the L11 operon by binding to its mRNA. The polypeptide is Large ribosomal subunit protein uL1 (Chromohalobacter salexigens (strain ATCC BAA-138 / DSM 3043 / CIP 106854 / NCIMB 13768 / 1H11)).